A 324-amino-acid chain; its full sequence is Zinc transporter ZIP1 (324 aa).

Over 1 to 30 the chain is Extracellular; it reads MGPWGEPELLVWRPEAVASEPPVPVGLEVK. A helical transmembrane segment spans residues 31-51; it reads LGALVLLLVLTLLCSLVPICV. The Cytoplasmic portion of the chain corresponds to 52–68; sequence LRRPGANHEGSASRQKA. Residues 69 to 89 traverse the membrane as a helical segment; sequence LSLVSCFAGGVFLATCLLDLL. Residues 90–104 are Extracellular-facing; that stretch reads PDYLAAIDEALAALH. A helical transmembrane segment spans residues 105–125; sequence VTLQFPLQEFILAMGFFLVLV. The Cytoplasmic portion of the chain corresponds to 126–179; it reads MEQITLAYKEQSGPSPLEETRALLGTVNGGPQHWHDGPGVPQASGAPATPSALR. The helical transmembrane segment at 180 to 200 threads the bilayer; sequence ACVLVFSLALHSVFEGLAVGL. Topologically, residues 201-206 are extracellular; it reads QRDRAR. Residues 207 to 227 form a helical membrane-spanning segment; that stretch reads AMELCLALLLHKGILAVSLSL. At 228–237 the chain is on the cytoplasmic side; that stretch reads RLLQSHLRAQ. The chain crosses the membrane as a helical span at residues 238-258; that stretch reads VVAGCGILFSCMTPLGIGLGA. The Extracellular portion of the chain corresponds to 259–272; that stretch reads ALAESAGPLHQLAQ. Residues 273–293 form a helical membrane-spanning segment; it reads SVLEGMAAGTFLYITFLEILP. At 294–303 the chain is on the cytoplasmic side; sequence QELASSEQRI. The helical transmembrane segment at 304–324 threads the bilayer; it reads LKVILLLAGFALLTGLLFIQI.

It belongs to the ZIP transporter (TC 2.A.5) family. Ubiquitous. Expressed in most adult and fetal tissues including the epidermis.

The protein resides in the cell membrane. It localises to the endoplasmic reticulum membrane. The catalysed reaction is Zn(2+)(in) = Zn(2+)(out). With respect to regulation, inhibited by Ni(2+) ions. Fe(2+) ions do not inhibit zinc uptake. Its function is as follows. Transporter for the divalent cation Zn(2+). Mediates the influx of Zn(2+) into cells from extracellular space. Functions as the major importer of zinc from circulating blood plasma into prostate cells. The chain is Zinc transporter ZIP1 from Homo sapiens (Human).